The following is a 180-amino-acid chain: ATP-dependent protease subunit HslV (180 aa).

Thr-10 is a catalytic residue. Residues Gly-165, Cys-168, and Thr-171 each contribute to the Na(+) site.

Belongs to the peptidase T1B family. HslV subfamily. In terms of assembly, a double ring-shaped homohexamer of HslV is capped on each side by a ring-shaped HslU homohexamer. The assembly of the HslU/HslV complex is dependent on binding of ATP.

It localises to the cytoplasm. It catalyses the reaction ATP-dependent cleavage of peptide bonds with broad specificity.. Allosterically activated by HslU binding. Functionally, protease subunit of a proteasome-like degradation complex believed to be a general protein degrading machinery. In Koribacter versatilis (strain Ellin345), this protein is ATP-dependent protease subunit HslV.